We begin with the raw amino-acid sequence, 420 residues long: Serine hydroxymethyltransferase (420 aa).

(6S)-5,6,7,8-tetrahydrofolate is bound by residues leucine 121 and 125–127 (GHL). Lysine 230 bears the N6-(pyridoxal phosphate)lysine mark. (6S)-5,6,7,8-tetrahydrofolate-binding positions include glutamate 246 and 354 to 356 (SPF).

It belongs to the SHMT family. As to quaternary structure, homodimer. It depends on pyridoxal 5'-phosphate as a cofactor.

The protein resides in the cytoplasm. The catalysed reaction is (6R)-5,10-methylene-5,6,7,8-tetrahydrofolate + glycine + H2O = (6S)-5,6,7,8-tetrahydrofolate + L-serine. It participates in one-carbon metabolism; tetrahydrofolate interconversion. Its pathway is amino-acid biosynthesis; glycine biosynthesis; glycine from L-serine: step 1/1. Catalyzes the reversible interconversion of serine and glycine with tetrahydrofolate (THF) serving as the one-carbon carrier. This reaction serves as the major source of one-carbon groups required for the biosynthesis of purines, thymidylate, methionine, and other important biomolecules. Also exhibits THF-independent aldolase activity toward beta-hydroxyamino acids, producing glycine and aldehydes, via a retro-aldol mechanism. The protein is Serine hydroxymethyltransferase of Rickettsia massiliae (strain Mtu5).